We begin with the raw amino-acid sequence, 155 residues long: MPRYFEGKLDAKGQKIGIVVSRFNSFITERLLEGAVDALVRHGADEQEIHIARVPGAFEIPLAAKKMAASGAYDAIIALGAVIRGSTPHFDYVSSEVTKGVAAVSLESGVPISFGVLTTDSIEQAVERAGTKAGNKGFEAAVTVIETVNLLRSIN.

5-amino-6-(D-ribitylamino)uracil contacts are provided by residues Phe23, 57–59, and 81–83; these read AFE and AVI. (2S)-2-hydroxy-3-oxobutyl phosphate is bound at residue 86–87; sequence ST. Residue His89 is the Proton donor of the active site. Residue Phe114 participates in 5-amino-6-(D-ribitylamino)uracil binding. Arg128 lines the (2S)-2-hydroxy-3-oxobutyl phosphate pocket.

The protein belongs to the DMRL synthase family.

The enzyme catalyses (2S)-2-hydroxy-3-oxobutyl phosphate + 5-amino-6-(D-ribitylamino)uracil = 6,7-dimethyl-8-(1-D-ribityl)lumazine + phosphate + 2 H2O + H(+). It participates in cofactor biosynthesis; riboflavin biosynthesis; riboflavin from 2-hydroxy-3-oxobutyl phosphate and 5-amino-6-(D-ribitylamino)uracil: step 1/2. Functionally, catalyzes the formation of 6,7-dimethyl-8-ribityllumazine by condensation of 5-amino-6-(D-ribitylamino)uracil with 3,4-dihydroxy-2-butanone 4-phosphate. This is the penultimate step in the biosynthesis of riboflavin. This is 6,7-dimethyl-8-ribityllumazine synthase from Pelobacter propionicus (strain DSM 2379 / NBRC 103807 / OttBd1).